The primary structure comprises 149 residues: D-aminoacyl-tRNA deacylase (149 aa).

The Gly-cisPro motif, important for rejection of L-amino acids motif lies at 141–142 (GP).

The protein belongs to the DTD family. Homodimer.

It localises to the cytoplasm. The catalysed reaction is glycyl-tRNA(Ala) + H2O = tRNA(Ala) + glycine + H(+). The enzyme catalyses a D-aminoacyl-tRNA + H2O = a tRNA + a D-alpha-amino acid + H(+). Its function is as follows. An aminoacyl-tRNA editing enzyme that deacylates mischarged D-aminoacyl-tRNAs. Also deacylates mischarged glycyl-tRNA(Ala), protecting cells against glycine mischarging by AlaRS. Acts via tRNA-based rather than protein-based catalysis; rejects L-amino acids rather than detecting D-amino acids in the active site. By recycling D-aminoacyl-tRNA to D-amino acids and free tRNA molecules, this enzyme counteracts the toxicity associated with the formation of D-aminoacyl-tRNA entities in vivo and helps enforce protein L-homochirality. This Streptomyces griseus subsp. griseus (strain JCM 4626 / CBS 651.72 / NBRC 13350 / KCC S-0626 / ISP 5235) protein is D-aminoacyl-tRNA deacylase.